A 437-amino-acid chain; its full sequence is uncharacterized protein (437 aa).

2 helical membrane passes run 102–122 (GIYM…PVII) and 272–292 (ILSI…ATVW).

It belongs to the herpesviridae UL49 family.

Its subcellular location is the host membrane. This is an uncharacterized protein from Connochaetes taurinus (Blue wildebeest).